A 403-amino-acid polypeptide reads, in one-letter code: Betaine--homocysteine S-methyltransferase 1 (403 aa).

The region spanning 8 to 311 (KGLLERLDAG…YHTRAIAEEL (304 aa)) is the Hcy-binding domain. 3 residues coordinate Zn(2+): Cys-214, Cys-296, and Cys-297.

In terms of assembly, homotetramer. The cofactor is Zn(2+).

It localises to the cytoplasm. The catalysed reaction is L-homocysteine + glycine betaine = N,N-dimethylglycine + L-methionine. Its pathway is amine and polyamine degradation; betaine degradation; sarcosine from betaine: step 1/2. It functions in the pathway amino-acid biosynthesis; L-methionine biosynthesis via de novo pathway; L-methionine from L-homocysteine (BhmT route): step 1/1. Functionally, involved in the regulation of homocysteine metabolism. Converts betaine and homocysteine to dimethylglycine and methionine, respectively. This reaction is also required for the irreversible oxidation of choline. This chain is Betaine--homocysteine S-methyltransferase 1 (bhmt), found in Xenopus tropicalis (Western clawed frog).